The primary structure comprises 192 residues: EF-hand protein 5 (192 aa).

Residues 1 to 36 form a disordered region; sequence MKDKAPVSSQQDHFSRGGAVGGKPISDVRGTSRPFY. 4 consecutive EF-hand domains span residues 46 to 80, 81 to 118, 119 to 154, and 155 to 190; these read AELA…GLHL, SDEE…EVDD, TMLE…GGEC, and STPE…HRLN. 5 residues coordinate Ca(2+): T100, E102, D107, D132, and T136.

This is EF-hand protein 5 from Trypanosoma brucei brucei.